The following is a 98-amino-acid chain: Co-chaperonin GroES (98 aa).

The protein belongs to the GroES chaperonin family. As to quaternary structure, heptamer of 7 subunits arranged in a ring. Interacts with the chaperonin GroEL.

It is found in the cytoplasm. Its function is as follows. Together with the chaperonin GroEL, plays an essential role in assisting protein folding. The GroEL-GroES system forms a nano-cage that allows encapsulation of the non-native substrate proteins and provides a physical environment optimized to promote and accelerate protein folding. GroES binds to the apical surface of the GroEL ring, thereby capping the opening of the GroEL channel. This Bartonella tribocorum (strain CIP 105476 / IBS 506) protein is Co-chaperonin GroES.